Consider the following 488-residue polypeptide: Ammonium transporter Rh type C-like 2 (488 aa).

Residues 1–21 are Cytoplasmic-facing; it reads MGNCFGSRGICDRPKNTNIRL. Residues 22–42 form a helical membrane-spanning segment; it reads SLPAVCFVWQVSMIILFGVFV. Topologically, residues 43 to 73 are extracellular; that stretch reads RYNEEADTNWVYTKKEKNITSDIENDFYFRY. The N-linked (GlcNAc...) asparagine glycan is linked to Asn-60. Residues 74–94 form a helical membrane-spanning segment; sequence PSFQDVHVMIFVGFGFLMTFL. The Cytoplasmic segment spans residues 95 to 98; the sequence is KRYS. Residues 99-119 traverse the membrane as a helical segment; the sequence is FGAVGFNFLIAAFGLQWALLM. Residues 120-139 lie on the Extracellular side of the membrane; the sequence is QGWFSPLGDDGKIKIGIENL. Residues 140 to 160 form a helical membrane-spanning segment; sequence INADFCVASCLIAYGAVLGKV. Topologically, residues 161–162 are cytoplasmic; that stretch reads SP. Residues 163 to 183 form a helical membrane-spanning segment; sequence VQLLVMTLFGITLYAVEEFII. Residues 184 to 191 are Extracellular-facing; that stretch reads LRVLNAKD. Residues 192 to 214 form a helical membrane-spanning segment; the sequence is AGGSMVIHTFGAYYGLSISRVLY. The Cytoplasmic segment spans residues 215–232; that stretch reads RPNLNKSKHMNGSVYHSD. The helical transmembrane segment at 233 to 253 threads the bilayer; it reads VFAMIGTLFLWMFWPSFNSAI. Residues 254 to 264 lie on the Extracellular side of the membrane; sequence CNHGDGQHRAA. A helical membrane pass occupies residues 265 to 285; the sequence is INTYLALASTVLTTVAISSMF. The Cytoplasmic portion of the chain corresponds to 286-298; it reads EKTGKLDMVHIQN. The helical transmembrane segment at 299-319 threads the bilayer; sequence STLAGGVAVGTAAEFMLMPYG. Residue Ser-320 is a topological domain, extracellular. A helical membrane pass occupies residues 321-341; sequence LIVGFFCGIISTLGYIYLTPF. Residues 342–356 lie on the Cytoplasmic side of the membrane; it reads LEERLKIQDTCGIHN. The helical transmembrane segment at 357 to 377 threads the bilayer; that stretch reads LHAMPGVIGGIVGAISAAAAS. The Extracellular segment spans residues 378-409; the sequence is KEVYGDLGLKNIFSIEGSNVTRLPTVQGGYQA. A helical transmembrane segment spans residues 410-430; sequence AALCVALCFGIGGGTFVGLVL. Residues 431 to 488 are Cytoplasmic-facing; that stretch reads KLPIWGDPADEHCFNDEMYWEVPEDEESIIPPVLSYNNHMIPNNKHEEMRETNFAEQS.

Belongs to the ammonium transporter (TC 2.A.49) family. Rh subfamily. In terms of assembly, homotrimer. In terms of tissue distribution, at larval stages, expressed only in the yolk sac and gill. However, the kidney and the gills are major sites of expression in adults.

It localises to the apical cell membrane. Functions as an ammonia transporter. May play a role in the elimination of ammonia in the gill. The chain is Ammonium transporter Rh type C-like 2 (rhcgl2) from Danio rerio (Zebrafish).